The following is a 556-amino-acid chain: Formate--tetrahydrofolate ligase (556 aa).

Residue 65-72 coordinates ATP; sequence TPAGEGKS.

This sequence belongs to the formate--tetrahydrofolate ligase family.

It catalyses the reaction (6S)-5,6,7,8-tetrahydrofolate + formate + ATP = (6R)-10-formyltetrahydrofolate + ADP + phosphate. Its pathway is one-carbon metabolism; tetrahydrofolate interconversion. The chain is Formate--tetrahydrofolate ligase from Streptococcus agalactiae serotype Ia (strain ATCC 27591 / A909 / CDC SS700).